The primary structure comprises 172 residues: uncharacterized protein (172 aa).

This is an uncharacterized protein from Microplitis demolitor bracovirus (isolate Webb) (MdBV).